We begin with the raw amino-acid sequence, 234 residues long: PHD finger protein ING1 (234 aa).

Positions 129 to 166 (NNGKAGNAGEGGRGGRKKTRLATAASTAAASTGMTSSN) are disordered. Positions 149 to 165 (LATAASTAAASTGMTSS) are enriched in low complexity. The PHD-type zinc finger occupies 178–227 (PTYCICNQVSFGEMVACDNNACKIEWFHFGCVGLKEQPKGKWYCPECATV). Zn(2+) contacts are provided by Cys-181, Cys-183, Cys-194, Cys-199, His-205, Cys-208, Cys-221, and Cys-224.

This sequence belongs to the ING family. As to quaternary structure, interacts with H3K4me3 and to a lesser extent with H3K4me2. In terms of tissue distribution, ubiquitously expressed.

The protein localises to the nucleus. Functionally, histone-binding component that specifically recognizes H3 tails trimethylated on 'Lys-4' (H3K4me3), which mark transcription start sites of virtually all active genes. This chain is PHD finger protein ING1 (ING1), found in Arabidopsis thaliana (Mouse-ear cress).